The primary structure comprises 419 residues: Glutamyl-tRNA reductase (419 aa).

Residues Thr50–Arg53, Ser108, Glu113–Gln115, and Gln119 each bind substrate. Catalysis depends on Cys51, which acts as the Nucleophile. Gly188–Ile193 provides a ligand contact to NADP(+).

The protein belongs to the glutamyl-tRNA reductase family. In terms of assembly, homodimer.

It carries out the reaction (S)-4-amino-5-oxopentanoate + tRNA(Glu) + NADP(+) = L-glutamyl-tRNA(Glu) + NADPH + H(+). The protein operates within porphyrin-containing compound metabolism; protoporphyrin-IX biosynthesis; 5-aminolevulinate from L-glutamyl-tRNA(Glu): step 1/2. Functionally, catalyzes the NADPH-dependent reduction of glutamyl-tRNA(Glu) to glutamate 1-semialdehyde (GSA). The polypeptide is Glutamyl-tRNA reductase (Albidiferax ferrireducens (strain ATCC BAA-621 / DSM 15236 / T118) (Rhodoferax ferrireducens)).